Here is a 320-residue protein sequence, read N- to C-terminus: Ribosomal RNA small subunit methyltransferase H (320 aa).

Residues 42-44 (GGH), Asp62, Phe86, Asp108, and Gln115 each bind S-adenosyl-L-methionine.

This sequence belongs to the methyltransferase superfamily. RsmH family.

It localises to the cytoplasm. The enzyme catalyses cytidine(1402) in 16S rRNA + S-adenosyl-L-methionine = N(4)-methylcytidine(1402) in 16S rRNA + S-adenosyl-L-homocysteine + H(+). In terms of biological role, specifically methylates the N4 position of cytidine in position 1402 (C1402) of 16S rRNA. The polypeptide is Ribosomal RNA small subunit methyltransferase H (Yersinia pseudotuberculosis serotype O:1b (strain IP 31758)).